Consider the following 128-residue polypeptide: MRHRKSGRQLNRNSSHRQAMFRNMAGSLVRHEIIKTTLPKAKELRRVVEPLITLAKTDSVANRRLAFARTRDNEIVAKLFNELGPRFASRAGGYTRILKCGFRAGDNAPMAYIELVDRAEPKAEAAAE.

This sequence belongs to the bacterial ribosomal protein bL17 family. In terms of assembly, part of the 50S ribosomal subunit. Contacts protein L32.

The protein is Large ribosomal subunit protein bL17 of Klebsiella pneumoniae (strain 342).